The following is a 633-amino-acid chain: Mini-chromosome maintenance complex-binding protein (633 aa).

The disordered stretch occupies residues Pro-154–Lys-198. Over residues Glu-174–His-184 the composition is skewed to basic and acidic residues.

Belongs to the MCMBP family. As to quaternary structure, interacts with the MCM complex: associates with the MCM3-7 complex which lacks MCM2, while it does not interact with the MCM complex when MCM2 is present (MCM2-7 complex).

Its subcellular location is the nucleus. Associated component of the MCM complex that acts as a regulator of DNA replication. Binds to the MCM complex during late S phase and promotes the disassembly of the MCM complex from chromatin, thereby acting as a key regulator of pre-replication complex (pre-RC) unloading from replicated DNA. Can dissociate the MCM complex without addition of ATP; probably acts by destabilizing interactions of each individual subunits of the MCM complex. Required for sister chromatid cohesion. The polypeptide is Mini-chromosome maintenance complex-binding protein (MCMBP) (Gallus gallus (Chicken)).